The chain runs to 455 residues: SUN domain-containing protein 2 (455 aa).

A compositionally biased stretch (polar residues) spans 1–12; that stretch reads MSASTVSITASP. The tract at residues 1 to 99 is disordered; that stretch reads MSASTVSITA…RTRKSQGNKI (99 aa). Serine 2 is modified (N-acetylserine). The Nuclear portion of the chain corresponds to 2-105; that stretch reads SASTVSITAS…GNKIDRGKWK (104 aa). Serine 63 is subject to Phosphoserine. A compositionally biased stretch (low complexity) spans 74 to 88; sequence KSGSTATGTNTTTTQ. Residues 88 to 95 carry the Nuclear localization signal motif; that stretch reads QRRTRKSQ. The chain crosses the membrane as a helical span at residues 106 to 128; that stretch reads TVVRVFAKQFGALLLLVGLIQLI. Over 129 to 455 the chain is Perinuclear space; that stretch reads RKLTLKDSSL…ELDSVSVAHA (327 aa). The stretch at 201–225 forms a coiled coil; it reads LHSELKKVESKTERLQVSVDELNAK. An SUN domain is found at 285–447; that stretch reads GGAFVMGHSD…YRFRVHGREL (163 aa).

Forms homomers (e.g. dimers, trimers and tetramers) and heteromers with SUN1. Interacts with SUN3, SUN4 and TIK. Core component of the LINC complex which is composed of inner nuclear membrane SUN domain-containing proteins coupled to outer nuclear membrane WIP and WIT proteins. The LINC complex also involves nucleoskeletal proteins CRWN/LINC and possibly KAKU4 and the cytoskeletal myosin KAKU1. Interacts with LINC1, WIP1, WIP2 and WIP3 at the nuclear envelope (NE). Interacts with SINE1, SINE2, SINE3 and SINE4. Interacts with NEAP1, NEA2 and NEAP3. Expressed in roots, hypocotyls, cotyledons and leaves and inflorescences.

It is found in the nucleus inner membrane. The protein localises to the cytoplasm. Its subcellular location is the cytoskeleton. The protein resides in the phragmoplast. It localises to the endoplasmic reticulum membrane. It is found in the nucleus envelope. Component of SUN-protein-containing multivariate complexes also called LINC complexes which link the nucleoskeleton and cytoskeleton by providing versatile outer nuclear membrane attachment sites for cytoskeletal filaments. Required for the maintenance and/or formation of polarized nuclear shape in root hairs. Modulates the anchoring and mobility of WIP proteins in the nuclear envelope (NE). In association with SUN1, may be involved in telomere attachment to nuclear envelope in the prophase of meiosis. As component of the SUN-WIP-WIT2-KAKU1 complex, mediates the transfer of cytoplasmic forces to the nuclear envelope (NE), leading to nuclear shape changes. This chain is SUN domain-containing protein 2, found in Arabidopsis thaliana (Mouse-ear cress).